The chain runs to 321 residues: N-acetyl-gamma-glutamyl-phosphate reductase (321 aa).

The active site involves cysteine 131.

Belongs to the NAGSA dehydrogenase family. Type 1 subfamily.

It localises to the cytoplasm. It catalyses the reaction N-acetyl-L-glutamate 5-semialdehyde + phosphate + NADP(+) = N-acetyl-L-glutamyl 5-phosphate + NADPH + H(+). It functions in the pathway amino-acid biosynthesis; L-arginine biosynthesis; N(2)-acetyl-L-ornithine from L-glutamate: step 3/4. Catalyzes the NADPH-dependent reduction of N-acetyl-5-glutamyl phosphate to yield N-acetyl-L-glutamate 5-semialdehyde. This chain is N-acetyl-gamma-glutamyl-phosphate reductase, found in Christiangramia forsetii (strain DSM 17595 / CGMCC 1.15422 / KT0803) (Gramella forsetii).